The primary structure comprises 252 residues: Imidazole glycerol phosphate synthase subunit HisF (252 aa).

Catalysis depends on residues aspartate 11 and aspartate 130.

It belongs to the HisA/HisF family. In terms of assembly, heterodimer of HisH and HisF.

The protein resides in the cytoplasm. The catalysed reaction is 5-[(5-phospho-1-deoxy-D-ribulos-1-ylimino)methylamino]-1-(5-phospho-beta-D-ribosyl)imidazole-4-carboxamide + L-glutamine = D-erythro-1-(imidazol-4-yl)glycerol 3-phosphate + 5-amino-1-(5-phospho-beta-D-ribosyl)imidazole-4-carboxamide + L-glutamate + H(+). It participates in amino-acid biosynthesis; L-histidine biosynthesis; L-histidine from 5-phospho-alpha-D-ribose 1-diphosphate: step 5/9. Its function is as follows. IGPS catalyzes the conversion of PRFAR and glutamine to IGP, AICAR and glutamate. The HisF subunit catalyzes the cyclization activity that produces IGP and AICAR from PRFAR using the ammonia provided by the HisH subunit. The chain is Imidazole glycerol phosphate synthase subunit HisF from Lacticaseibacillus casei (strain BL23) (Lactobacillus casei).